The following is a 151-amino-acid chain: MTLEDKIENLLRPTIETMGFQFWGCEYLPAGKHSTLRIYIDKDEVGVTVDDCGKVSRQVSAIMDVEDPISNAYMLEVSSPGMDRPLFHPEQYKAYEGQEVQVRTSSPVMGRKRFKGVMSQVSESDIAVEVDGELYEIPFSLIDKANVVPQF.

It belongs to the RimP family.

The protein resides in the cytoplasm. In terms of biological role, required for maturation of 30S ribosomal subunits. This Hydrogenovibrio crunogenus (strain DSM 25203 / XCL-2) (Thiomicrospira crunogena) protein is Ribosome maturation factor RimP.